Here is a 475-residue protein sequence, read N- to C-terminus: tRNA-2-methylthio-N(6)-dimethylallyladenosine synthase (475 aa).

Residues 1–10 (MQETTVKRDG) show a composition bias toward basic and acidic residues. Residues 1–22 (MQETTVKRDGASPSDAGTPATT) form a disordered region. The MTTase N-terminal domain occupies 27–144 (GKLYIRTFGC…LPDLIKRRRA (118 aa)). [4Fe-4S] cluster-binding residues include C36, C73, C107, C181, C185, and C188. The region spanning 167-400 (RVDGATAFVS…QALINQQAAA (234 aa)) is the Radical SAM core domain. The TRAM domain occupies 403–466 (QGMIGTRQRV…TNSLRGRVAG (64 aa)).

It belongs to the methylthiotransferase family. MiaB subfamily. As to quaternary structure, monomer. Requires [4Fe-4S] cluster as cofactor.

The protein resides in the cytoplasm. The catalysed reaction is N(6)-dimethylallyladenosine(37) in tRNA + (sulfur carrier)-SH + AH2 + 2 S-adenosyl-L-methionine = 2-methylsulfanyl-N(6)-dimethylallyladenosine(37) in tRNA + (sulfur carrier)-H + 5'-deoxyadenosine + L-methionine + A + S-adenosyl-L-homocysteine + 2 H(+). Its function is as follows. Catalyzes the methylthiolation of N6-(dimethylallyl)adenosine (i(6)A), leading to the formation of 2-methylthio-N6-(dimethylallyl)adenosine (ms(2)i(6)A) at position 37 in tRNAs that read codons beginning with uridine. The polypeptide is tRNA-2-methylthio-N(6)-dimethylallyladenosine synthase (Bordetella parapertussis (strain 12822 / ATCC BAA-587 / NCTC 13253)).